Here is a 503-residue protein sequence, read N- to C-terminus: Asparagine--tRNA ligase (503 aa).

The protein belongs to the class-II aminoacyl-tRNA synthetase family. As to quaternary structure, homodimer.

The protein localises to the cytoplasm. The catalysed reaction is tRNA(Asn) + L-asparagine + ATP = L-asparaginyl-tRNA(Asn) + AMP + diphosphate + H(+). The sequence is that of Asparagine--tRNA ligase from Aster yellows witches'-broom phytoplasma (strain AYWB).